The sequence spans 93 residues: MPRSLKKGPFIDDHVMKKVEKAQESGDRRVIKTWSRRSTISPEMVGLTFAVHNGRKFIPVFVTENMVGHKLGEFSPTRTYYGHAADKKSKAKR.

It belongs to the universal ribosomal protein uS19 family.

Protein S19 forms a complex with S13 that binds strongly to the 16S ribosomal RNA. The polypeptide is Small ribosomal subunit protein uS19 (Oleidesulfovibrio alaskensis (strain ATCC BAA-1058 / DSM 17464 / G20) (Desulfovibrio alaskensis)).